Here is a 750-residue protein sequence, read N- to C-terminus: Glutathione biosynthesis bifunctional protein GshAB (750 aa).

The tract at residues 1–333 (MIIDRLLQRS…EANRLNDLIA (333 aa)) is glutamate--cysteine ligase. The disordered stretch occupies residues 32–51 (QPTQRVAQTPHPKTLGSRNY). In terms of domain architecture, ATP-grasp spans 489 to 747 (KKILDEKHFP…ITPRILAKLF (259 aa)). 516 to 574 (SQIQDKPIVVKPKSTNFGLGISIFKTSANLASYEKAIDIAFTEDSAILVEEYIEGTEYR) lines the ATP pocket. Mg(2+)-binding residues include Asp696, Glu717, and Asn719. Asp696, Glu717, and Asn719 together coordinate Mn(2+).

In the N-terminal section; belongs to the glutamate--cysteine ligase type 1 family. Type 2 subfamily. Monomer. Mg(2+) serves as cofactor. It depends on Mn(2+) as a cofactor.

The enzyme catalyses L-cysteine + L-glutamate + ATP = gamma-L-glutamyl-L-cysteine + ADP + phosphate + H(+). It carries out the reaction gamma-L-glutamyl-L-cysteine + glycine + ATP = glutathione + ADP + phosphate + H(+). The protein operates within sulfur metabolism; glutathione biosynthesis; glutathione from L-cysteine and L-glutamate: step 1/2. It participates in sulfur metabolism; glutathione biosynthesis; glutathione from L-cysteine and L-glutamate: step 2/2. Functionally, synthesizes glutathione from L-glutamate and L-cysteine via gamma-L-glutamyl-L-cysteine. The sequence is that of Glutathione biosynthesis bifunctional protein GshAB from Streptococcus agalactiae serotype III (strain NEM316).